We begin with the raw amino-acid sequence, 236 residues long: Small ribosomal subunit protein uS2c (236 aa).

Belongs to the universal ribosomal protein uS2 family.

It localises to the plastid. The protein localises to the chloroplast. In Guizotia abyssinica (Niger), this protein is Small ribosomal subunit protein uS2c (rps2).